A 413-amino-acid chain; its full sequence is Imidazolonepropionase (413 aa).

Fe(3+) is bound by residues histidine 77 and histidine 79. Zn(2+)-binding residues include histidine 77 and histidine 79. Residues arginine 86, tyrosine 149, and histidine 182 each coordinate 4-imidazolone-5-propanoate. Tyrosine 149 is a binding site for N-formimidoyl-L-glutamate. Fe(3+) is bound at residue histidine 247. Position 247 (histidine 247) interacts with Zn(2+). Glutamine 250 contributes to the 4-imidazolone-5-propanoate binding site. A Fe(3+)-binding site is contributed by aspartate 322. Position 322 (aspartate 322) interacts with Zn(2+). Residues asparagine 324 and glycine 326 each contribute to the N-formimidoyl-L-glutamate site. Threonine 327 contributes to the 4-imidazolone-5-propanoate binding site.

Belongs to the metallo-dependent hydrolases superfamily. HutI family. The cofactor is Zn(2+). Fe(3+) is required as a cofactor.

It localises to the cytoplasm. It carries out the reaction 4-imidazolone-5-propanoate + H2O = N-formimidoyl-L-glutamate. It participates in amino-acid degradation; L-histidine degradation into L-glutamate; N-formimidoyl-L-glutamate from L-histidine: step 3/3. Catalyzes the hydrolytic cleavage of the carbon-nitrogen bond in imidazolone-5-propanoate to yield N-formimidoyl-L-glutamate. It is the third step in the universal histidine degradation pathway. This is Imidazolonepropionase from Chromobacterium violaceum (strain ATCC 12472 / DSM 30191 / JCM 1249 / CCUG 213 / NBRC 12614 / NCIMB 9131 / NCTC 9757 / MK).